The chain runs to 34 residues: uncharacterized protein (34 aa).

This is an uncharacterized protein from Saccharomyces cerevisiae (strain ATCC 204508 / S288c) (Baker's yeast).